We begin with the raw amino-acid sequence, 105 residues long: Large ribosomal subunit protein uL24 (105 aa).

It belongs to the universal ribosomal protein uL24 family. In terms of assembly, part of the 50S ribosomal subunit.

Its function is as follows. One of two assembly initiator proteins, it binds directly to the 5'-end of the 23S rRNA, where it nucleates assembly of the 50S subunit. In terms of biological role, one of the proteins that surrounds the polypeptide exit tunnel on the outside of the subunit. The sequence is that of Large ribosomal subunit protein uL24 from Leptothrix cholodnii (strain ATCC 51168 / LMG 8142 / SP-6) (Leptothrix discophora (strain SP-6)).